Here is a 366-residue protein sequence, read N- to C-terminus: Polyprenyl transferase AOL_s00215g276 (366 aa).

A disordered region spans residues 1 to 22 (MESIIARPRTRSSAKEKTQTMS). 7 helical membrane passes run 53 to 73 (LHTL…CLSA), 85 to 105 (FLSV…AFCT), 137 to 157 (IIAF…TLGF), 160 to 180 (ALVC…KRVV), 185 to 205 (LVLG…VAGN), 212 to 232 (AVPM…IYAT), and 253 to 273 (HMHQ…SFTA). A glycan (N-linked (GlcNAc...) asparagine) is linked at Asn-277. Helical transmembrane passes span 281–301 (LFWS…LLSL) and 312–332 (VFLM…IELW). Asn-352 is a glycosylation site (N-linked (GlcNAc...) asparagine).

The protein belongs to the UbiA prenyltransferase family. Requires Mg(2+) as cofactor.

Its subcellular location is the membrane. The protein operates within secondary metabolite biosynthesis; terpenoid biosynthesis. Functionally, polyprenyl transferase; part of the gene cluster that mediates the biosynthesis of sesquiterpenyl epoxy-cyclohexenoids (SECs) such as anthrobotrisins and arthrosporols, metabolites that possess a novel hybrid carbon skeleton consisting of a polyketide-derived epoxycyclohexenol combined with a terpenoid-derived monocyclic sesquiterpenol substructure (PKS-PTS hybrid). The SEC pathway plays an important role for fungal soil colonization via decreasing fungal nematode-capturing ability. Within the pathway, the polyprenyl transferase catalyzes the farnesylation of toluquinol to yield farnesyl hydroquinone, the first hybrid precursor for biosynthesis of SECs, and farnesyl quinone (34) might be the key precursor for the epoxy ring formation. The pathway begins with the biosynthesis of 6-methylsalicylic acid (6-MSA), the first precursor of the polyketide-derived epoxycyclohexenol in arthrosporols, by the polyketide synthase (PKS) AOL_s00215g283 via condensation of 1 acetate and 3 malonate units. The 6-methylsalicylic acid decarboxylase AOL_s00215g281 then catalyzes the decarboxylation of 6-methylsalicylic acid to yield m-cresol. The cytochrome P450 monooxygenase AOL_s00215g282 further oxidizes m-cresol to yield toluquinol. With the assistance of the oxidoreductase AOL_s00215g277, the polyprenyl transferase AOL_s00215g276 catalyzes the farnesylation of toluquinol to produce farnesyl hydroquinone, the hybrid precursor for biosynthesis of SECs. Farnesyl hydroquinone undergoes epoxidation and then subsequent dehydrogenation to form farnesyl epoxy-quinone, the first and simplest SEC. The cytochrome P450 monooxygenase AOL_s00215g278 and the FAD-dependent monooxygenase AOL_s00215g279 might be involved in the oxygenation of the phenol moiety, most likely in the epoxy formation. The cytochrome P450 monooxygenases AOL_s00215g274 and AOL_s00215g280 are involved in specific regional ketone reductions at respectively C-4 and C-1 of farnesyl epoxy-quinone PubMed:33823587. This chain is Polyprenyl transferase AOL_s00215g276, found in Arthrobotrys oligospora (strain ATCC 24927 / CBS 115.81 / DSM 1491) (Nematode-trapping fungus).